A 137-amino-acid polypeptide reads, in one-letter code: Holo-[acyl-carrier-protein] synthase (137 aa).

Mg(2+)-binding residues include D8 and E58.

It belongs to the P-Pant transferase superfamily. AcpS family. Requires Mg(2+) as cofactor.

It localises to the cytoplasm. The enzyme catalyses apo-[ACP] + CoA = holo-[ACP] + adenosine 3',5'-bisphosphate + H(+). In terms of biological role, transfers the 4'-phosphopantetheine moiety from coenzyme A to a Ser of acyl-carrier-protein. This Lactobacillus delbrueckii subsp. bulgaricus (strain ATCC BAA-365 / Lb-18) protein is Holo-[acyl-carrier-protein] synthase.